A 499-amino-acid polypeptide reads, in one-letter code: Putative sodium-dependent excitatory amino acid transporter glt-4 (499 aa).

Residues 1 to 7 (MAKLSKE) lie on the Cytoplasmic side of the membrane. 3 helical membrane-spanning segments follow: residues 8 to 28 (NLLL…GFSL), 50 to 70 (FVQM…ITSL), and 87 to 107 (IYYT…VSVI). An N-linked (GlcNAc...) asparagine glycan is attached at asparagine 165. 3 consecutive transmembrane segments (helical) span residues 194–217 (VSDG…IGVI), 227–254 (FFKS…TFLI), and 276–297 (ITVI…CVVL). The segment at residues 303–333 (IKFVGGMAQALLTALATSSSSATLPLSIKCC) is an intramembrane region (discontinuously helical). Residue 320–322 (SSS) participates in L-aspartate binding. A helical membrane pass occupies residues 343 to 369 (VTRFVLPLGATINMDGTALYEAVAAIY). Residues glycine 351, threonine 353, and asparagine 355 each coordinate Na(+). Residues threonine 359, 400–404 (IPQAG), aspartate 433, and asparagine 440 each bind L-aspartate. The discontinuously helical intramembrane region spans 383 to 416 (VVLVSLTATLASIGAAGIPQAGIVTMIMVLIAIG). A helical transmembrane segment spans residues 430-451 (FMLDRLRTTVNVHGDSIATAVI). Residues asparagine 440 and aspartate 444 each contribute to the Na(+) site.

This sequence belongs to the dicarboxylate/amino acid:cation symporter (DAACS) (TC 2.A.23) family.

The protein resides in the cell membrane. In terms of biological role, sodium-dependent, high-affinity amino acid transporter that mediates the uptake of L-glutamate and also L-aspartate and D-aspartate. Functions as a symporter that transports one amino acid molecule together with two or three Na(+) ions and one proton, in parallel with the counter-transport of one K(+) ion. Mediates Cl(-) flux that is not coupled to amino acid transport; this avoids the accumulation of negative charges due to aspartate and Na(+) symport. The sequence is that of Putative sodium-dependent excitatory amino acid transporter glt-4 (glt-4) from Caenorhabditis elegans.